The following is a 156-amino-acid chain: Ribosomal RNA large subunit methyltransferase H (156 aa).

S-adenosyl-L-methionine-binding positions include L73, G104, and 123 to 128; that span reads VSSLTL.

It belongs to the RNA methyltransferase RlmH family. Homodimer.

Its subcellular location is the cytoplasm. It catalyses the reaction pseudouridine(1915) in 23S rRNA + S-adenosyl-L-methionine = N(3)-methylpseudouridine(1915) in 23S rRNA + S-adenosyl-L-homocysteine + H(+). Functionally, specifically methylates the pseudouridine at position 1915 (m3Psi1915) in 23S rRNA. This chain is Ribosomal RNA large subunit methyltransferase H, found in Burkholderia thailandensis (strain ATCC 700388 / DSM 13276 / CCUG 48851 / CIP 106301 / E264).